A 389-amino-acid polypeptide reads, in one-letter code: Probable nitrate transporter NarT (389 aa).

12 helical membrane passes run 14–34 (TLSL…MPFI), 45–65 (ISII…PFGY), 69–89 (IVGA…PIFF), 97–117 (GMLM…SVGV), 139–159 (GNIG…IIGW), 161–181 (TTVR…FIFG), 211–231 (WYFI…NYLV), 246–266 (GVFI…GDKF), 268–288 (AVKV…ILGI), 294–314 (LFTV…GLIF), 331–351 (IVSM…TYVA), and 353–373 (LTGS…IALF).

The protein belongs to the major facilitator superfamily. Nitrate/nitrite porter (TC 2.A.1.8) family.

The protein localises to the cell membrane. Its function is as follows. Probably required for nitrate uptake under anoxic conditions. Also possibly involved in excretion of nitrite produced by the dissimilatory reduction of nitrate. In Staphylococcus aureus (strain bovine RF122 / ET3-1), this protein is Probable nitrate transporter NarT (narT).